The primary structure comprises 201 residues: Glycerol-3-phosphate acyltransferase (201 aa).

Transmembrane regions (helical) follow at residues 10-30, 60-80, 86-106, 116-136, and 166-186; these read MLIGALIFGYVLGSIPFGLIL, LAAATLILDALKGTAAALIAA, AAIAAGFGAFIGHLFPVWIGF, LGVLIGLAWAGALVFAAAWIV, and ALAALFAIMTVIVFIKHRANI.

It belongs to the PlsY family. Probably interacts with PlsX.

Its subcellular location is the cell inner membrane. The catalysed reaction is an acyl phosphate + sn-glycerol 3-phosphate = a 1-acyl-sn-glycero-3-phosphate + phosphate. It participates in lipid metabolism; phospholipid metabolism. Catalyzes the transfer of an acyl group from acyl-phosphate (acyl-PO(4)) to glycerol-3-phosphate (G3P) to form lysophosphatidic acid (LPA). This enzyme utilizes acyl-phosphate as fatty acyl donor, but not acyl-CoA or acyl-ACP. The protein is Glycerol-3-phosphate acyltransferase of Brucella melitensis biotype 2 (strain ATCC 23457).